Here is a 352-residue protein sequence, read N- to C-terminus: UDP-N-acetylglucosamine--N-acetylmuramyl-(pentapeptide) pyrophosphoryl-undecaprenol N-acetylglucosamine transferase (352 aa).

Residues S195 and Q287 each contribute to the UDP-N-acetyl-alpha-D-glucosamine site.

Belongs to the glycosyltransferase 28 family. MurG subfamily.

The protein localises to the cell membrane. The catalysed reaction is Mur2Ac(oyl-L-Ala-gamma-D-Glu-L-Lys-D-Ala-D-Ala)-di-trans,octa-cis-undecaprenyl diphosphate + UDP-N-acetyl-alpha-D-glucosamine = beta-D-GlcNAc-(1-&gt;4)-Mur2Ac(oyl-L-Ala-gamma-D-Glu-L-Lys-D-Ala-D-Ala)-di-trans,octa-cis-undecaprenyl diphosphate + UDP + H(+). It functions in the pathway cell wall biogenesis; peptidoglycan biosynthesis. Functionally, cell wall formation. Catalyzes the transfer of a GlcNAc subunit on undecaprenyl-pyrophosphoryl-MurNAc-pentapeptide (lipid intermediate I) to form undecaprenyl-pyrophosphoryl-MurNAc-(pentapeptide)GlcNAc (lipid intermediate II). The protein is UDP-N-acetylglucosamine--N-acetylmuramyl-(pentapeptide) pyrophosphoryl-undecaprenol N-acetylglucosamine transferase of Streptococcus pneumoniae (strain 70585).